A 1733-amino-acid chain; its full sequence is Protein NETWORKED 1D (1733 aa).

The NAB domain occupies 12-92 (YSWWWDSHIS…ERYDHATGVI (81 aa)). 4 coiled-coil regions span residues 195–816 (KEIN…RESS), 897–931 (LIAE…QIDS), 960–1043 (DENS…QKLI), and 1196–1386 (ARSA…NDLM). The segment at 1456–1476 (LKTSSARRSRRRNGSLRKQNH) is disordered. Over residues 1460-1470 (SARRSRRRNGS) the composition is skewed to basic residues. 2 coiled-coil regions span residues 1553-1627 (ANKR…KVQN) and 1653-1686 (SEQA…DRED). Residues 1628 to 1656 (GFERSDGSKSSMDLDENESSRRRRISEQA) form a disordered region.

This sequence belongs to the NET family.

Plant-specific actin binding protein. May be part of a membrane-cytoskeletal adapter complex. This Arabidopsis thaliana (Mouse-ear cress) protein is Protein NETWORKED 1D.